Consider the following 244-residue polypeptide: LexA repressor (244 aa).

Residues 1 to 24 (MSDSSDTTVDGASDGASDGASGAD) form a disordered region. Low complexity predominate over residues 10–24 (DGASDGASDGASGAD). A DNA-binding region (H-T-H motif) is located at residues 58-78 (IREIGDAVGLTSTSSVAHQLR). Catalysis depends on for autocatalytic cleavage activity residues S168 and K205.

This sequence belongs to the peptidase S24 family. In terms of assembly, homodimer.

The catalysed reaction is Hydrolysis of Ala-|-Gly bond in repressor LexA.. Represses a number of genes involved in the response to DNA damage (SOS response), including recA and lexA. In the presence of single-stranded DNA, RecA interacts with LexA causing an autocatalytic cleavage which disrupts the DNA-binding part of LexA, leading to derepression of the SOS regulon and eventually DNA repair. The polypeptide is LexA repressor (Mycobacterium ulcerans (strain Agy99)).